The following is a 500-amino-acid chain: Zinc finger protein PLAG1 (500 aa).

Residues 1-30 (MATVIPGDLSEVRDTQKVPSGKRKRGETKP) are disordered. Residues 2–84 (ATVIPGDLSE…SKYKLQRHMA (83 aa)) are interaction with KPNA2. Residues 22–25 (KRKR) carry the Nuclear localization signal motif. 7 C2H2-type zinc fingers span residues 34 to 56 (FPCQ…SYSH), 62 to 86 (YKCI…MATH), 92 to 114 (HKCN…LHTH), 121 to 143 (FKCE…LALH), 150 to 172 (LTCK…LKSH), 185 to 207 (HQCE…MVVH), and 213 to 236 (FLCQ…KKSH). The decreased nuclear import with localization in the nucleus but also in the cytoplasm stretch occupies residues 41–242 (KAFNSVEKLK…KKSHNQELLK (202 aa)). Residues 243-384 (VKTEPVDFLD…QASSSSKLGL (142 aa)) form a repression domain; contains 3 sumoylation motifs and massively decrease transcription activity region. Residues 243-500 (VKTEPVDFLD…TLPRFHQAFQ (258 aa)) are activates transcription; Inhibition of nuclear import due to lack of NLS and KPNA2 interaction. Residues lysine 244 and lysine 263 each participate in a glycyl lysine isopeptide (Lys-Gly) (interchain with G-Cter in SUMO) cross-link. The disordered stretch occupies residues 365–388 (GGVPSSSQDSQASSSSKLGLDPQI). Residues 369–380 (SSSQDSQASSSS) are compositionally biased toward low complexity. Residues 385–500 (DPQIGSLDDG…TLPRFHQAFQ (116 aa)) are massively activates transcription.

This sequence belongs to the krueppel C2H2-type zinc-finger protein family. Interacts with KPNA2, which escorts protein to the nucleus via interaction with nuclear localization signal. Interacts with E3 SUMO-protein ligase PIAS1, PIAS2 and PIAS4. In terms of processing, sumoylated with SUMO1; which inhibits transcriptional activity, but does not affect nuclear localization. Blockers of sumoylation pathway such as SENP3 and inactive UBE2I increases transcriptional capacity. Sumoylation is increased in the presence of PIAS1. Acetylated by lysine acetyltransferase EP300; which activates transcriptional capacity. Lysine residues that are sumoylated also seem to be target for acetylation. In terms of tissue distribution, expressed in fetal tissues such as lung, liver and kidney. Not detected or weak detection in normal adult tissues, but highly expressed in salivary gland with benign or malignant pleiomorphic adenomas with or without 8q12 aberrations, with preferential occurrence in benign tumors.

Its subcellular location is the nucleus. Transcription factor whose activation results in up-regulation of target genes, such as IGFII, leading to uncontrolled cell proliferation: when overexpressed in cultured cells, higher proliferation rate and transformation are observed. Other target genes such as CRLF1, CRABP2, CRIP2, PIGF are strongly induced in cells with PLAG1 induction. Proto-oncogene whose ectopic expression can trigger the development of pleomorphic adenomas of the salivary gland and lipoblastomas. Overexpression is associated with up-regulation of IGFII, is frequently observed in hepatoblastoma, common primary liver tumor in childhood. Cooperates with CBFB-MYH11, a fusion gene important for myeloid leukemia. The sequence is that of Zinc finger protein PLAG1 (PLAG1) from Homo sapiens (Human).